Here is a 243-residue protein sequence, read N- to C-terminus: Transmembrane protein 174 (243 aa).

The next 2 membrane-spanning stretches (helical) occupy residues 40–60 (LLFS…MGWI) and 73–93 (LLGP…VCKF). A disordered region spans residues 205 to 229 (AGHDRPSSDADQLEGTQMGEEERVC).

Interacts with SLC34A1; regulates SLC34A1 internalization by PTH and FGF23.

The protein resides in the endoplasmic reticulum membrane. It localises to the apical cell membrane. Regulator of plasma phosphate homeostasis. Decreases serum inorganic phosphate (Pi) uptake by regulating the sodium-phosphate cotransporter SLC34A1 trafficking by PTH and FGF23 in the kidney. The protein is Transmembrane protein 174 (Tmem174) of Rattus norvegicus (Rat).